The following is a 298-amino-acid chain: Fluorinase (298 aa).

Residues Asp14, 19–21 (DDS), Tyr75, Ser156, Asp209, Asn214, 268–269 (SR), and 276–278 (RNA) each bind S-adenosyl-L-methionine.

The protein belongs to the SAM hydrolase / SAM-dependent halogenase family.

The catalysed reaction is fluoride + S-adenosyl-L-methionine = 5'-deoxy-5'-fluoroadenosine + L-methionine. Its function is as follows. Catalyzes the formation of a C-F bond by combining S-adenosyl-L-methionine (SAM) and fluoride to generate 5'-fluoro-5'-deoxyadenosine (5'-FDA) and L-methionine. The chain is Fluorinase from Actinoplanes sp. (strain N902-109).